Here is a 198-residue protein sequence, read N- to C-terminus: MNSGREPRTPRTLLSIADILAPRMVPRAPSAPQLPESGPGPTSPLCALEELTSKTFRGLDARALQPSEGRAGPDALGPGPFGRKRRKSRTAFTAQQVLELERRFVFQKYLAPSERDGLATRLGLANAQVVTWFQNRRAKLKRDVEEMRADVASLRALSPEVLCSLALPEGAPDPGLCLGPAGPDSRPHLSDEEIQVDD.

3 disordered regions span residues M24–C46, A63–R89, and D173–D198. The homeobox DNA-binding region spans R85–V144.

It is found in the nucleus. Its function is as follows. Transcription factor. The sequence is that of Transcription factor LBX2 (LBX2) from Homo sapiens (Human).